Consider the following 977-residue polypeptide: Structural protein ORF43 (977 aa).

The disordered stretch occupies residues 531–556 (DNDNINKQQQQQRERNDDDDDDDDST).

Belongs to the ascovirus HvAV ORF146 family.

It is found in the virion. The sequence is that of Structural protein ORF43 from Noctuidae (owlet moths).